The primary structure comprises 48 residues: Bacteriochlorophyll c-binding protein (48 aa).

A bacteriochlorophyll c is bound at residue His25.

This sequence belongs to the BChl C/E-binding protein family.

It is found in the chlorosome. It localises to the chlorosome envelope. Its function is as follows. Component of the photosynthetic apparatus. The light harvesting B740 complex binds bacteriochlorophyll c. This chain is Bacteriochlorophyll c-binding protein (csmA), found in Chlorobaculum thiosulfatiphilum (Chlorobium limicola f.sp. thiosulfatophilum).